Here is a 115-residue protein sequence, read N- to C-terminus: Large ribosomal subunit protein bL20 (115 aa).

It belongs to the bacterial ribosomal protein bL20 family.

Binds directly to 23S ribosomal RNA and is necessary for the in vitro assembly process of the 50S ribosomal subunit. It is not involved in the protein synthesizing functions of that subunit. The sequence is that of Large ribosomal subunit protein bL20 from Methylococcus capsulatus (strain ATCC 33009 / NCIMB 11132 / Bath).